The primary structure comprises 1512 residues: MAALCLTVNAGNPPLEALLAVEHVKGDVSISVEEGKENLLRVSETVAFTDVNSILRYLARIATTSGLYGTNLMEHTEIDHWLEFSATKLSSCDRLTSAINELNHCLSLRTYLVGNSLTLADLCVWATLKGSAAWQEHLKQNKTLVHVKRWFGFLEAQQAFRSVGTKWDVSGNRATVAPDKKQDVGKFVELPGAEMGKVTVRFPPEASGYLHIGHAKAALLNQHYQVNFKGKLIMRFDDTNPEKEKEDFEKVILEDVAMLHIKPDQFTYTSDHFETIMKYAEKLIQEGKAYVDDTPAEQMKAEREQRTESKHRKNSVEKNLQMWEEMKKGSQFGQSCCLRAKIDMSSNNGCMRDPTLYRCKIQPHPRTGNKYNVYPTYDFACPIVDSIEGVTHALRTTEYHDRDEQFYWIIEALGIRKPYIWEYSRLNLNNTVLSKRKLTWFVNEGLVDGWDDPRFPTVRGVLRRGMTVEGLKQFIAAQGSSRSVVNMEWDKIWAFNKKVIDPVAPRYVALLKKEVVPVNVLDAQEEMKEVARHPKNPDVGLKPVWYSPKVFIEGADAETFSEGEMVTFINWGNINITKIHKNADGKITSLDAKLNLENKDYKKTTKITWLAESTHALSIPAVCVTYEHLITKPVLGKDEDFKQYINKDSKHEELMLGDPCLKDLKKGDIIQLQRRGFFICDQPYEPVSPYSCREAPCILIYIPDGHTKEMPTSGSKEKTKVEISKKETSSAPKERPAPAVSSTCATAEDSSVLYSRVAVQGDVVRELKAKKAPKEDIDAAVKQLLTLKAEYKEKTGQEYKPGNPSAAAVQTVSTKSSSNTVESTSLYNKVAAQGEVVRKLKAEKAPKAKVTEAVECLLSLKAEYKEKTGKDYVPGQPPASQNSHSNPVSNAQPAGAEKPEAKVLFDRVACQGEVVRKLKAEKASKDQVDSAVQELLQLKAQYKSLTGIEYKPVSATGAEDKDKKKKEKENKSEKQNKPQKQNDGQGKDSSKSQGSGLSSGGAGEGQGPKKQTRLGLEAKKEENLAEWYSQVITKSEMIEYYDVSGCYILRPWSYSIWESIKDFFDAEIKKLGVENCYFPIFVSQAALEKEKNHIEDFAPEVAWVTRSGKTELAEPIAIRPTSETVMYPAYAKWVQSHRDLPVRLNQWCNVVRWEFKHPQPFLRTREFLWQEGHSAFATFEEAADEVLQILELYARVYEELLAIPVVRGRKTEKEKFAGGDYTTTIEAFISASGRAIQGATSHHLGQNFSKMCEIVFEDPKTPGEKQFAYQCSWGLTTRTIGVMVMVHGDNMGLVLPPRVASVQVVVIPCGITNALSEEDREALMAKCNEYRRRLLGANIRVRVDLRDNYSPGWKFNHWELKGVPVRLEVGPRDMKSCQFVAVRRDTGEKLTIAEKEAEAKLEKVLEDIQLNLFTRASEDLKTHMVVSNTLEDFQKVLDAGKVAQIPFCGEIDCEDWIKKMTARDQDVEPGAPSMGAKSLCIPFNPLCELQPGAMCVCGKNPAKFYTLFGRSY.

A glutamate--tRNA ligase region spans residues 164-759 (GTKWDVSGNR…SSVLYSRVAV (596 aa)). The short motif at 204–214 (PEASGYLHIGH) is the 'HIGH' region element. Residues 294–315 (TPAEQMKAEREQRTESKHRKNS) form a disordered region. Basic and acidic residues predominate over residues 299 to 308 (MKAEREQRTE). Residue Lys-300 is modified to N6-acetyllysine; alternate. Position 300 is an N6-malonyllysine; alternate (Lys-300). Position 355 is a phosphothreonine (Thr-355). Lys-417 carries the post-translational modification N6-acetyllysine. The 'KMSKS' region signature appears at 432–436 (VLSKR). Ser-434 is subject to Phosphoserine. 4 positions are modified to N6-acetyllysine: Lys-498, Lys-535, Lys-542, and Lys-637. The segment covering 709–736 (EMPTSGSKEKTKVEISKKETSSAPKERP) has biased composition (basic and acidic residues). The segment at 709-742 (EMPTSGSKEKTKVEISKKETSSAPKERPAPAVSS) is disordered. The WHEP-TRS 1 domain maps to 749–805 (DSSVLYSRVAVQGDVVRELKAKKAPKEDIDAAVKQLLTLKAEYKEKTGQEYKPGNPS). Residues 760–956 (QGDVVRELKA…GIEYKPVSAT (197 aa)) are 3 X 57 AA approximate repeats. An N6-acetyllysine modification is found at Lys-788. A disordered region spans residues 795–819 (TGQEYKPGNPSAAAVQTVSTKSSSN). Positions 808–819 (AVQTVSTKSSSN) are enriched in polar residues. The WHEP-TRS 2 domain maps to 822–878 (ESTSLYNKVAAQGEVVRKLKAEKAPKAKVTEAVECLLSLKAEYKEKTGKDYVPGQPP). At Lys-861 the chain carries N6-acetyllysine. Disordered regions lie at residues 869–898 (GKDY…GAEK) and 956–1011 (TGAE…PKKQ). Phosphotyrosine is present on Tyr-872. The span at 878–892 (PASQNSHSNPVSNAQ) shows a compositional bias: polar residues. Ser-885 is subject to Phosphoserine. Residues 900–956 (EAKVLFDRVACQGEVVRKLKAEKASKDQVDSAVQELLQLKAQYKSLTGIEYKPVSAT) form the WHEP-TRS 3 domain. Basic and acidic residues predominate over residues 958–976 (AEDKDKKKKEKENKSEKQN). Residues 997–1006 (LSSGGAGEGQ) are compositionally biased toward gly residues. Ser-998 carries the phosphoserine modification. Phosphoserine; by RPS6KB1 is present on Ser-999. Residues 1007 to 1512 (GPKKQTRLGL…KFYTLFGRSY (506 aa)) form a proline--tRNA ligase region. Residues 1121–1123 (TSE) and Arg-1152 contribute to the L-proline site. Residues Arg-1152, Glu-1154, Arg-1163, Thr-1164, Gln-1237, and Thr-1240 each coordinate ATP. At Arg-1152 the chain carries Omega-N-methylarginine. Gln-1237 contacts Mg(2+). His-1242 lines the L-proline pocket. Residues Thr-1276 and Arg-1278 each coordinate ATP. Ser-1350 bears the Phosphoserine mark. Zn(2+) contacts are provided by Cys-1448, Cys-1453, Cys-1495, and Cys-1497. Lys-1503 is subject to N6-acetyllysine.

It in the N-terminal section; belongs to the class-I aminoacyl-tRNA synthetase family. Glutamate--tRNA ligase type 2 subfamily. In the C-terminal section; belongs to the class-II aminoacyl-tRNA synthetase family. In terms of assembly, homodimer. Part of the aminoacyl-tRNA synthetase multienzyme complex, also know as multisynthetase complex, that is composed of the tRNA ligases for Arg (RARS1), Asp (DARS1), Gln (QARS1), Ile (IARS1), Leu (LARS1), Lys (KARS1), Met (MARS1) the bifunctional ligase for Glu and Pro (EPRS1) and the auxiliary subunits AIMP1/p43, AIMP2/p38 and EEF1E1/p18. Forms a linear complex that contains MARS1, EEF1E1, EPRS1 and AIMP2 that is at the core of the multisubunit complex. Interacts with TARS3. Interacts with DUS2L. Component of the GAIT complex which is composed of EPRS1, RPL13A and GAPDH. Interacts (phosphorylated at Ser-999) with SLC27A1; mediates the translocation of SLC27A1 from the cytoplasm to the plasma membrane thereby increasing the uptake of long-chain fatty acids. Post-translationally, phosphorylated at Ser-999 by RPS6KB1; triggers EPRS1 release from the aminoacyl-tRNA synthetase multienzyme complex. In monocytes, the IFN-gamma-induced phosphorylation at Ser-999 releases EPRS1 from the aminoacyl-tRNA synthetase multienzyme complex, allowing its association with the GAIT complex. Phosphorylation at Ser-999 is specifically required for the RPL13A-mediated interaction of the GAIT complex with eIF4G. Phosphorylation at Ser-999 by RPS6KB1, is also induced by insulin through activation of the mTORC1 signaling pathway and promotes the interaction of EPRS1 with SLC27A1.

It is found in the cytoplasm. It localises to the cytosol. Its subcellular location is the membrane. The catalysed reaction is tRNA(Glu) + L-glutamate + ATP = L-glutamyl-tRNA(Glu) + AMP + diphosphate. It catalyses the reaction tRNA(Pro) + L-proline + ATP = L-prolyl-tRNA(Pro) + AMP + diphosphate. Its function is as follows. Multifunctional protein which primarily functions within the aminoacyl-tRNA synthetase multienzyme complex, also known as multisynthetase complex. Within the complex it catalyzes the attachment of both L-glutamate and L-proline to their cognate tRNAs in a two-step reaction where the amino acid is first activated by ATP to form a covalent intermediate with AMP. Subsequently, the activated amino acid is transferred to the acceptor end of the cognate tRNA to form L-glutamyl-tRNA(Glu) and L-prolyl-tRNA(Pro). Upon interferon-gamma stimulation, EPRS1 undergoes phosphorylation, causing its dissociation from the aminoacyl-tRNA synthetase multienzyme complex. It is recruited to form the GAIT complex, which binds to stem loop-containing GAIT elements found in the 3'-UTR of various inflammatory mRNAs, such as ceruloplasmin. The GAIT complex inhibits the translation of these mRNAs, allowing interferon-gamma to redirect the function of EPRS1 from protein synthesis to translation inhibition in specific cell contexts. Furthermore, it can function as a downstream effector in the mTORC1 signaling pathway, by promoting the translocation of SLC27A1 from the cytoplasm to the plasma membrane where it mediates the uptake of long-chain fatty acid by adipocytes. Thereby, EPRS1 also plays a role in fat metabolism and more indirectly influences lifespan. In Mus musculus (Mouse), this protein is Bifunctional glutamate/proline--tRNA ligase.